The chain runs to 627 residues: Transketolase-like protein 2 (627 aa).

Residue histidine 39 coordinates substrate. Thiamine diphosphate contacts are provided by residues serine 42, histidine 79, and 125–127 (GSL). Mg(2+) is bound at residue aspartate 157. Residues glycine 158 and asparagine 187 each coordinate thiamine diphosphate. Mg(2+) contacts are provided by asparagine 187 and leucine 189. Lysine 249 and histidine 263 together coordinate thiamine diphosphate. Positions 263, 323, and 350 each coordinate substrate. The thiamine diphosphate site is built by glutamate 371 and phenylalanine 397. Glutamate 371 serves as the catalytic Proton donor. 2 residues coordinate substrate: histidine 421 and aspartate 429. Residue glutamine 433 coordinates thiamine diphosphate. Residue arginine 479 coordinates substrate.

The protein belongs to the transketolase family. As to quaternary structure, homodimer. Mg(2+) serves as cofactor. The cofactor is Ca(2+). Mn(2+) is required as a cofactor. It depends on Co(2+) as a cofactor. Requires thiamine diphosphate as cofactor.

The catalysed reaction is D-sedoheptulose 7-phosphate + D-glyceraldehyde 3-phosphate = aldehydo-D-ribose 5-phosphate + D-xylulose 5-phosphate. Its function is as follows. Plays an essential role in total transketolase activity and cell proliferation in cancer cells; after transfection with anti-TKTL1 siRNA, total transketolase activity dramatically decreases and proliferation was significantly inhibited in cancer cells. Plays a pivotal role in carcinogenesis. In Mus musculus (Mouse), this protein is Transketolase-like protein 2 (Tktl2).